A 698-amino-acid chain; its full sequence is Adhesion G protein-coupled receptor F4 (698 aa).

A signal peptide spans M1–C19. The Extracellular segment spans residues S20 to T409. Residues N61, N168, N213, N268, N290, N344, and N375 are each glycosylated (N-linked (GlcNAc...) asparagine). Positions R250 to K401 constitute a GAIN-B domain. Cystine bridges form between C353-C380 and C368-C382. The tract at residues C353–K401 is GPS. A helical transmembrane segment spans residues F410–V430. Over W431–H444 the chain is Cytoplasmic. The helical transmembrane segment at V445–S465 threads the bilayer. An N-linked (GlcNAc...) asparagine glycan is attached at N466. Residues N466–H486 lie on the Extracellular side of the membrane. A helical membrane pass occupies residues F487–I507. Over L508–R518 the chain is Cytoplasmic. The helical transmembrane segment at M519–V539 threads the bilayer. At T540–A566 the chain is on the extracellular side. N-linked (GlcNAc...) asparagine glycosylation occurs at N559. The helical transmembrane segment at F567 to I587 threads the bilayer. Residues N588–N611 lie on the Cytoplasmic side of the membrane. Residues V612–E632 form a helical membrane-spanning segment. At G633–H635 the chain is on the extracellular side. Residues L636–F656 traverse the membrane as a helical segment. Residues G657 to R698 are Cytoplasmic-facing.

It belongs to the G-protein coupled receptor 2 family. Adhesion G-protein coupled receptor (ADGR) subfamily. As to expression, expressed in squamous epithelia.

It localises to the membrane. Functionally, orphan receptor. This Mus musculus (Mouse) protein is Adhesion G protein-coupled receptor F4 (Adgrf4).